The primary structure comprises 332 residues: MLFLQFLFVDVVLGGSITENVVQENISLYLMQISSYANQSWTQNLGSAWLDQLQTHSWDSESGTIIFLHAWSRGNFSNEEVTDMQLLLRVHFAELTLDVHQQASQLQFKYPFDIQVRLGCELHSRETTKSFLHVAFNGLNFLSFQHKSCVPSPEGETRAQKACDILNTYEATKEIAYYVMNDICPRLLLSLLEAGKMDLQRQVRPEVWLSSSPNLEPGRLLLACHVSGFYPKPIWVMWMRGAQEQLETKQGDILPHADGTWYLRVTLNVVAEEAAGLSCRVRHSSLRDQDIILYWGHGLSVILIALAVIVPLVLLIVLVLLCKKRCTYQGIP.

A signal peptide spans 1–17 (MLFLQFLFVDVVLGGSI). The Extracellular segment spans residues 18–300 (TENVVQENIS…IILYWGHGLS (283 aa)). Residues Asn25, Asn38, and Asn75 are each glycosylated (N-linked (GlcNAc...) asparagine). 2 disulfide bridges follow: Cys120–Cys184 and Cys224–Cys279. Residues 205-292 (PEVWLSSSPN…HSSLRDQDII (88 aa)) enclose the Ig-like domain. Residues 301-321 (VILIALAVIVPLVLLIVLVLL) traverse the membrane as a helical segment. Residues 322-332 (CKKRCTYQGIP) lie on the Cytoplasmic side of the membrane.

Heterodimer with B2M (beta-2-microglobulin).

Its subcellular location is the cell membrane. It localises to the endosome membrane. Functionally, antigen-presenting protein that binds self and non-self lipid and glycolipid antigens and presents them to T-cell receptors on natural killer T-cells. This chain is T-cell surface glycoprotein CD1c2 (CD1C2), found in Cavia porcellus (Guinea pig).